The sequence spans 121 residues: Acidic phospholipase A2 SpII RP4 (121 aa).

Cystine bridges form between Cys-25-Cys-114, Cys-27-Cys-43, Cys-42-Cys-94, Cys-48-Cys-121, Cys-49-Cys-87, Cys-56-Cys-80, and Cys-74-Cys-85. Residues Tyr-26, Gly-28, and Gly-30 each coordinate Ca(2+). His-46 is a catalytic residue. A Ca(2+)-binding site is contributed by Asp-47. Asp-88 is an active-site residue.

Requires Ca(2+) as cofactor. In terms of tissue distribution, expressed by the venom gland.

Its subcellular location is the secreted. The catalysed reaction is a 1,2-diacyl-sn-glycero-3-phosphocholine + H2O = a 1-acyl-sn-glycero-3-phosphocholine + a fatty acid + H(+). In terms of biological role, snake venom phospholipase A2 (PLA2) which exhibits indirect hemolysis, induces mild edema inflammation in the foot pads of mice and slightly delays anticoagulant activities. In mice, not lethal, even at the highest dose, and exhibits low to moderate myotoxicity on muscular fibers. PLA2 catalyzes the calcium-dependent hydrolysis of the 2-acyl groups in 3-sn-phosphoglycerides. The chain is Acidic phospholipase A2 SpII RP4 from Bothrops alternatus (Urutu).